Reading from the N-terminus, the 275-residue chain is Interleukin-2 receptor subunit alpha (275 aa).

A signal peptide spans 1–21 (MEPSLLLWGILTFVVVHGHVT). One can recognise a Sushi 1 domain in the interval 22–84 (ELCDENPPDI…SWENQCRCIS (63 aa)). Topologically, residues 22 to 243 (ELCDENPPDI…ESFVFTTEYQ (222 aa)) are extracellular. Intrachain disulfides connect C24-C67, C49-C80, and C51-C82. N-linked (GlcNAc...) asparagine glycosylation is found at N60 and N70. The interval 91–118 (DGQIIPKPEEQKGKSPMGMQSQMQPTDQ) is disordered. The span at 108–118 (GMQSQMQPTDQ) shows a compositional bias: polar residues. One can recognise a Sushi 2 domain in the interval 123-186 (GHCREPPPWE…WTQPRLQCLS (64 aa)). 2 cysteine pairs are disulfide-bonded: C125–C168 and C152–C184. Residues 188–213 (RSDGWFPDDEEPQASTDAALGSDTSC) are disordered. A helical transmembrane segment spans residues 244-262 (IAVAGCVLLLISIVLLSGL). Topologically, residues 263–275 (TWQRRWRKSRRTI) are cytoplasmic.

Non-covalent dimer of an alpha and a beta subunit. IL2R exists in 3 different forms: a high affinity dimer, an intermediate affinity monomer (beta subunit), and a low affinity monomer (alpha subunit). The high and intermediate affinity forms also associate with a gamma subunit.

The protein resides in the membrane. Functionally, receptor for interleukin-2. The receptor is involved in the regulation of immune tolerance by controlling regulatory T cells (TREGs) activity. TREGs suppress the activation and expansion of autoreactive T-cells. The sequence is that of Interleukin-2 receptor subunit alpha (IL2RA) from Felis catus (Cat).